A 371-amino-acid chain; its full sequence is Probable beta-1,3-galactosyltransferase 12 (371 aa).

The tract at residues 1-36 (MPLFSHRFTTASSSSPASPSYYNKPSSKTHKPNSSS) is disordered. Positions 11-36 (ASSSSPASPSYYNKPSSKTHKPNSSS) are enriched in low complexity. A helical; Signal-anchor for type II membrane protein membrane pass occupies residues 46 to 66 (VAIIFFSLVSVFIGVAGTIFA). N-linked (GlcNAc...) asparagine glycosylation is present at asparagine 291.

This sequence belongs to the glycosyltransferase 31 family. It depends on Mn(2+) as a cofactor.

The protein resides in the golgi apparatus membrane. The protein operates within protein modification; protein glycosylation. In terms of biological role, beta-1,3-galactosyltransferase that transfers galactose from UDP-galactose to substrates with a terminal glycosyl residue. The polypeptide is Probable beta-1,3-galactosyltransferase 12 (B3GALT12) (Arabidopsis thaliana (Mouse-ear cress)).